We begin with the raw amino-acid sequence, 200 residues long: ATP synthase subunit s, mitochondrial (200 aa).

The transit peptide at 1 to 25 (MMMFGKISRQLFSLKKIPWSCDSRY) directs the protein to the mitochondrion. Residues 1 to 61 (MMMFGKISRQ…SEWLLRCGAK (61 aa)) form an N-terminal domain region. Glycine 59 serves as a coordination point for Mg(2+). 4 LRR repeats span residues 62-87 (VRYCGHQKWLQDYNKLPGGSVDRYKI), 88-116 (QAIDATDSCIMDIGFDHLVGLEHVERITL), 117-141 (CRCHYIEDNCLQRLSQLENLRKSLL), and 142-173 (ELEIIACGNVTDNGVIALRHFKNLKYLFLSDL). Threonine 93 contributes to the Mg(2+) binding site.

Belongs to the ATP synthase subunit s family. In terms of assembly, homotetramer. Associates with ATP synthase.

It is found in the mitochondrion. It localises to the mitochondrion inner membrane. Functionally, involved in regulation of mitochondrial membrane ATP synthase. Necessary for H(+) conduction of ATP synthase. Facilitates energy-driven catalysis of ATP synthesis by blocking a proton leak through an alternative proton exit pathway. This is ATP synthase subunit s, mitochondrial from Rattus norvegicus (Rat).